Reading from the N-terminus, the 248-residue chain is Tyrosine recombinase XerD-like (248 aa).

Residues 1–72 enclose the Core-binding (CB) domain; that stretch reads MKSYIEPFIA…TANQFLYYLY (72 aa). The 164-residue stretch at 85 to 248 folds into the Tyr recombinase domain; that stretch reads DTMKVMRTEK…PVTLEKYYKS (164 aa). Catalysis depends on residues Lys-149 and Arg-213. Tyr-245 acts as the O-(3'-phospho-DNA)-tyrosine intermediate in catalysis.

It belongs to the 'phage' integrase family. XerD-like subfamily.

It is found in the cytoplasm. Its function is as follows. Putative tyrosine recombinase. Not involved in the cutting and rejoining of the recombining DNA molecules on dif(SL) site. This chain is Tyrosine recombinase XerD-like, found in Streptococcus pyogenes serotype M3 (strain ATCC BAA-595 / MGAS315).